The sequence spans 79 residues: ESX secretion system protein YukD (79 aa).

Belongs to the EsaB family.

Functionally, required for YukE secretion. Probable component or regulator of the ESX/ESAT-6-like secretion system (BsEss). In Bacillus subtilis (strain 168), this protein is ESX secretion system protein YukD (yukD).